The chain runs to 270 residues: tRNA pseudouridine synthase A (270 aa).

D51 functions as the Nucleophile in the catalytic mechanism. Y109 is a binding site for substrate.

It belongs to the tRNA pseudouridine synthase TruA family. In terms of assembly, homodimer.

The enzyme catalyses uridine(38/39/40) in tRNA = pseudouridine(38/39/40) in tRNA. Its function is as follows. Formation of pseudouridine at positions 38, 39 and 40 in the anticodon stem and loop of transfer RNAs. This is tRNA pseudouridine synthase A from Burkholderia lata (strain ATCC 17760 / DSM 23089 / LMG 22485 / NCIMB 9086 / R18194 / 383).